The chain runs to 1016 residues: Protein TIC110, chloroplastic (1016 aa).

Residues 1–51 (MNPSLVTAINAPISPSPRSPLLSHFLPTLPHRFSKSECLSRRRYRVSFPRS) constitute a chloroplast transit peptide. Residue S52 is modified to N-acetylserine. Residues 52–95 (SAASSDQLSVSTQAKNPGIHGNKKELTGLQPIVEKMTPPVRLAT) are Stromal-facing. Residues 96 to 116 (SAVVLAASLATGYGLGLRLAG) form a helical membrane-spanning segment. Residues 117-118 (SR) lie on the Chloroplast intermembrane side of the membrane. The chain crosses the membrane as a helical span at residues 119–139 (NIAFGGAAVAGAAGGAVVYAL). Over 140-259 (NSAVPEVAAI…EREGDAEQRR (120 aa)) the chain is Stromal. The chain crosses the membrane as a helical span at residues 260-280 (AFMRLVYVSALVFGDASSFLL). The Chloroplast intermembrane segment spans residues 281–368 (PWKRVLKVTD…SILKSRTRAA (88 aa)). The helical transmembrane segment at 369-386 (KSLASVVEELEKVLEFNN) threads the bilayer. Topologically, residues 387–632 (LLVSLKSHSE…RAAENRTDSA (246 aa)) are stromal. Residues 633 to 650 (KELKKMIAFNTLVVTEMV) form a helical membrane-spanning segment. The Chloroplast intermembrane portion of the chain corresponds to 651-719 (ADIKGESSDK…DDLPDRDRID (69 aa)). A compositionally biased stretch (basic and acidic residues) spans 654–669 (KGESSDKAPEEDPVQE). The interval 654-708 (KGESSDKAPEEDPVQEKEEDDEDEEWGSLESLRKTRPDKELAEKMGKPGQTEITL) is disordered. Residues 670 to 680 (KEEDDEDEEWG) show a composition bias toward acidic residues. Positions 684–699 (SLRKTRPDKELAEKMG) are enriched in basic and acidic residues. The helical transmembrane segment at 720 to 736 (LYKTYLLYCVTGEVTRI) threads the bilayer. Topologically, residues 737 to 1016 (PFGAQITTKR…SAAEEGNFVF (280 aa)) are stromal.

It belongs to the chloroplast envelope anion channel-forming Tic110 (TC 1.A.18) family. As to quaternary structure, part of the Tic complex. Interacts with HSP70, HSP93 and TIC40. Interacts with the Toc complex components TOC33, TOC75 and TOC159. Interacts with LTD. As to expression, expressed in seedlings, flowers, leaves, stems and roots.

The protein resides in the plastid. Its subcellular location is the chloroplast inner membrane. In terms of biological role, involved in protein precursor import into chloroplasts. Forms a voltage-dependent cation-selective channel at the inner envelope of chloroplasts, which specifically responds to a transit peptide. Associates with both the precursor and mature forms of the preprotein. The sequence is that of Protein TIC110, chloroplastic (TIC110) from Arabidopsis thaliana (Mouse-ear cress).